The following is a 388-amino-acid chain: MAFVKAERLKLLPPYLFQEIDRLKAELTAKGVDVINLGVGDPDLPTPDHIIARLKTAAEDPSTHQYPSYSGMNDFKVSVAGWYKRRFGVELDPLSEVLTLIGSKEGLAHFPLAVINPGDLALVPTPAYPVYHVATMFAGGESYFMPLVRENGFLPDLDSIPADVARRAKVMFINYPNNPTGATAERDFFEKVIAFAREYDVIVCHDAAYTEMAFGGYRPLSFLELPGAGEVGVEFHSLSKTYNMTGWRLGFAVGNADILAGLGQVKSNIDSGAFNAVQWAGITALEGDQGCVVEMQRIYKERLDILIEGLKRIGLHPEVPRATFYVWCPTPPGYSSKDFSSLLLREAGIVATPGSGFGAPGEGYIRMALTVDKERVREAVERMRKLSF.

Substrate contacts are provided by Tyr15 and Gly40. Residues Tyr69, 103–104 (SK), Tyr128, Asn178, Tyr209, and 237–239 (SLS) each bind pyridoxal 5'-phosphate. The substrate site is built by Lys104, Tyr128, and Asn178. Lys240 bears the N6-(pyridoxal phosphate)lysine mark. Arg248 contacts pyridoxal 5'-phosphate. Arg366 contacts substrate.

The protein belongs to the class-I pyridoxal-phosphate-dependent aminotransferase family. LL-diaminopimelate aminotransferase subfamily. Homodimer. The cofactor is pyridoxal 5'-phosphate.

The enzyme catalyses (2S,6S)-2,6-diaminopimelate + 2-oxoglutarate = (S)-2,3,4,5-tetrahydrodipicolinate + L-glutamate + H2O + H(+). Its pathway is amino-acid biosynthesis; L-lysine biosynthesis via DAP pathway; LL-2,6-diaminopimelate from (S)-tetrahydrodipicolinate (aminotransferase route): step 1/1. Involved in the synthesis of meso-diaminopimelate (m-DAP or DL-DAP), required for both lysine and peptidoglycan biosynthesis. Catalyzes the direct conversion of tetrahydrodipicolinate to LL-diaminopimelate. Can also use m-DAP instead of LL-DAP as the amino-group donor. The sequence is that of LL-diaminopimelate aminotransferase from Syntrophobacter fumaroxidans (strain DSM 10017 / MPOB).